Here is a 123-residue protein sequence, read N- to C-terminus: Large ribosomal subunit protein bL17 (123 aa).

Belongs to the bacterial ribosomal protein bL17 family. In terms of assembly, part of the 50S ribosomal subunit. Contacts protein L32.

This Mycoplasma genitalium (strain ATCC 33530 / DSM 19775 / NCTC 10195 / G37) (Mycoplasmoides genitalium) protein is Large ribosomal subunit protein bL17.